Consider the following 431-residue polypeptide: L-lysine N6-monooxygenase MbtG (431 aa).

A signal peptide spans 1–21 (MNPTLAVLGAGAKAVAVAAKA).

This sequence belongs to the lysine N(6)-hydroxylase/L-ornithine N(5)-oxygenase family. The cofactor is FAD.

It catalyses the reaction L-lysine + NADPH + O2 = N(6)-hydroxy-L-lysine + NADP(+) + H2O. Its pathway is siderophore biosynthesis; mycobactin biosynthesis. Flavoprotein monooxygenase required for N-hydroxylation of the two acylated lysine residues during mycobactin assembly, thus producing the hydroxamate groups necessary for iron sequestration. Is also able, but less efficiently, to hydroxylate L-lysine (non acylated) in vitro. This is L-lysine N6-monooxygenase MbtG (mbtG) from Mycobacterium bovis (strain ATCC BAA-935 / AF2122/97).